The chain runs to 358 residues: UDP-N-acetylglucosamine--N-acetylmuramyl-(pentapeptide) pyrophosphoryl-undecaprenol N-acetylglucosamine transferase (358 aa).

Residues 13 to 15 (TGG), Asn-125, Arg-162, Ser-190, Ile-244, 263 to 268 (ALTVAE), and Gln-289 contribute to the UDP-N-acetyl-alpha-D-glucosamine site.

It belongs to the glycosyltransferase 28 family. MurG subfamily.

It localises to the cell inner membrane. The catalysed reaction is di-trans,octa-cis-undecaprenyl diphospho-N-acetyl-alpha-D-muramoyl-L-alanyl-D-glutamyl-meso-2,6-diaminopimeloyl-D-alanyl-D-alanine + UDP-N-acetyl-alpha-D-glucosamine = di-trans,octa-cis-undecaprenyl diphospho-[N-acetyl-alpha-D-glucosaminyl-(1-&gt;4)]-N-acetyl-alpha-D-muramoyl-L-alanyl-D-glutamyl-meso-2,6-diaminopimeloyl-D-alanyl-D-alanine + UDP + H(+). It functions in the pathway cell wall biogenesis; peptidoglycan biosynthesis. Its function is as follows. Cell wall formation. Catalyzes the transfer of a GlcNAc subunit on undecaprenyl-pyrophosphoryl-MurNAc-pentapeptide (lipid intermediate I) to form undecaprenyl-pyrophosphoryl-MurNAc-(pentapeptide)GlcNAc (lipid intermediate II). The polypeptide is UDP-N-acetylglucosamine--N-acetylmuramyl-(pentapeptide) pyrophosphoryl-undecaprenol N-acetylglucosamine transferase (Halorhodospira halophila (strain DSM 244 / SL1) (Ectothiorhodospira halophila (strain DSM 244 / SL1))).